Reading from the N-terminus, the 414-residue chain is Serine hydroxymethyltransferase (414 aa).

(6S)-5,6,7,8-tetrahydrofolate is bound by residues Leu121 and 125–127; that span reads GHL. Lys229 carries the post-translational modification N6-(pyridoxal phosphate)lysine.

The protein belongs to the SHMT family. Homodimer. Pyridoxal 5'-phosphate serves as cofactor.

It localises to the cytoplasm. It catalyses the reaction (6R)-5,10-methylene-5,6,7,8-tetrahydrofolate + glycine + H2O = (6S)-5,6,7,8-tetrahydrofolate + L-serine. It functions in the pathway one-carbon metabolism; tetrahydrofolate interconversion. It participates in amino-acid biosynthesis; glycine biosynthesis; glycine from L-serine: step 1/1. In terms of biological role, catalyzes the reversible interconversion of serine and glycine with tetrahydrofolate (THF) serving as the one-carbon carrier. This reaction serves as the major source of one-carbon groups required for the biosynthesis of purines, thymidylate, methionine, and other important biomolecules. Also exhibits THF-independent aldolase activity toward beta-hydroxyamino acids, producing glycine and aldehydes, via a retro-aldol mechanism. The protein is Serine hydroxymethyltransferase of Polynucleobacter necessarius subsp. necessarius (strain STIR1).